The chain runs to 698 residues: Probable Xaa-Pro aminopeptidase P (698 aa).

Mn(2+)-binding residues include aspartate 509, aspartate 520, glutamate 604, and glutamate 618.

This sequence belongs to the peptidase M24B family. Mn(2+) serves as cofactor.

The enzyme catalyses Release of any N-terminal amino acid, including proline, that is linked to proline, even from a dipeptide or tripeptide.. Its function is as follows. Catalyzes the removal of a penultimate prolyl residue from the N-termini of peptides. This is Probable Xaa-Pro aminopeptidase P (AMPP) from Trichophyton verrucosum (strain HKI 0517).